The primary structure comprises 297 residues: Lysenin (297 aa).

The N-terminal cap domain stretch occupies residues 10 to 33 (EQIEVDVVAVWKEGYVYENRGSTS). Residues 34-107 (VDQKITITKG…SKVIEHTITI (74 aa)) are beta-hairpin domain. The interval 108–156 (PPTSKFTRWQLNADVGGADIEYMYLIDEVTPIGGTQSIPQVITSRAKII) is N-terminal cap domain. The tract at residues 157–297 (VGRQIILGKT…EDKWILEVVG (141 aa)) is C-terminal receptor-binding domain. Positions 185, 227, 233, and 282 each coordinate an N-(acyl)-sphingosylphosphocholine. A disulfide bridge links Cys272 with Cys283.

The protein belongs to the lysenin family. In terms of assembly, binds to sphingomyelin as a monomer by using its C-terminal domain. Forms a nonamer when sphingomyelin/lysenin ratio is lower than ca 500. Oligomerization, but not binding, is influenced by the fluidity of sphingomyelin. As to expression, expressed by coelomocytes.

The protein resides in the secreted. It localises to the target cell membrane. Functionally, pore-forming toxin that defensively acts against parasitic microorganisms by forming pores in sphingomyelin-containing membranes. Has hemolytic activity and is also cytotoxic to spermatozoa of some species of invertebrates and many species of vertebrates and to amphibian larvae, guinea pig polymorphonuclear leukocytes, chicken fibroblasts, normal spleen cells and various tumor cells. Is lethal for various species of reptiles, amphibian, birds and mammals. Induces smooth muscle contraction. It binds sphingomyelin and induces hemolysis in the same manner as lysenin-related protein 2, and is 10-fold more effective than lysenin-related protein 1. The sequence is that of Lysenin from Eisenia fetida (Red wiggler worm).